A 514-amino-acid chain; its full sequence is Maturase K (514 aa).

Belongs to the intron maturase 2 family. MatK subfamily.

The protein resides in the plastid. It is found in the chloroplast. Functionally, usually encoded in the trnK tRNA gene intron. Probably assists in splicing its own and other chloroplast group II introns. The polypeptide is Maturase K (Zamia integrifolia (Coontie)).